Consider the following 568-residue polypeptide: Sesquiterpene synthase 14 (568 aa).

Positions 319, 323, 463, and 471 each coordinate Mg(2+). The short motif at 319–323 (DDLYD) is the DDXXD motif element.

It belongs to the terpene synthase family. Tpsa subfamily. The cofactor is Mg(2+). Mn(2+) serves as cofactor. Mostly expressed in roots, to a lower extent in flowers and, at low levels, in fruits.

The enzyme catalyses (2Z,6Z)-farnesyl diphosphate = (E)-alpha-bisabolene + diphosphate. The catalysed reaction is (2Z,6Z)-farnesyl diphosphate = beta-bisabolene + diphosphate. It carries out the reaction (2E,6E)-farnesyl diphosphate = beta-bisabolene + diphosphate. It catalyses the reaction (2E,6E)-farnesyl diphosphate = (Z)-gamma-bisabolene + diphosphate. The enzyme catalyses (2E,6E)-farnesyl diphosphate = (E)-gamma-bisabolene + diphosphate. The catalysed reaction is (2Z,6Z)-farnesyl diphosphate = (E)-gamma-bisabolene + diphosphate. It participates in secondary metabolite biosynthesis; terpenoid biosynthesis. Sesquiterpene synthase involved in the biosynthesis of volatile compounds. Mediates the conversion of (2E,6E)-farnesyl diphosphate ((EE)-FPP) into beta-bisabolene, and of (2Z,6Z)-farnesyl diphosphate ((ZZ)-FPP) into alpha-bisabolene, but also smaller amounts of (Z)-gamma-bisabolene, (E)-gamma-bisabolene and nerolidol. The chain is Sesquiterpene synthase 14 from Solanum lycopersicum (Tomato).